A 101-amino-acid chain; its full sequence is DNA-binding protein Fis (101 aa).

Positions 77-96 form a DNA-binding region, H-T-H motif; that stretch reads QTRAANMLGINRGTLRKKLK.

It belongs to the transcriptional regulatory Fis family. In terms of assembly, homodimer.

Activates ribosomal RNA transcription. Plays a direct role in upstream activation of rRNA promoters. The polypeptide is DNA-binding protein Fis (Shewanella sediminis (strain HAW-EB3)).